The chain runs to 159 residues: Ribosomal RNA large subunit methyltransferase H (159 aa).

Residues leucine 76 and glycine 108 each coordinate S-adenosyl-L-methionine.

This sequence belongs to the RNA methyltransferase RlmH family. Homodimer.

The protein localises to the cytoplasm. The catalysed reaction is pseudouridine(1915) in 23S rRNA + S-adenosyl-L-methionine = N(3)-methylpseudouridine(1915) in 23S rRNA + S-adenosyl-L-homocysteine + H(+). Specifically methylates the pseudouridine at position 1915 (m3Psi1915) in 23S rRNA. This Natranaerobius thermophilus (strain ATCC BAA-1301 / DSM 18059 / JW/NM-WN-LF) protein is Ribosomal RNA large subunit methyltransferase H.